A 52-amino-acid chain; its full sequence is uncharacterized protein (52 aa).

Residues 24 to 52 (LRENPSKNVRTIPDAGDENSSFGHARVIA) are disordered.

This is an uncharacterized protein from Treponema pallidum (strain Nichols).